A 563-amino-acid chain; its full sequence is Coiled-coil domain-containing protein 38 (563 aa).

Residues 1–11 (MSSNLLPTLNS) show a composition bias toward polar residues. The segment at 1 to 21 (MSSNLLPTLNSGGKVKDGSTK) is disordered. The stretch at 129–212 (KRNTIKKFEK…VKSEIAKTEF (84 aa)) forms a coiled coil. The tract at residues 272 to 311 (ESGRTAVLSEDASQGRDSQGKPSRSLTRTPEKKKSNLAES) is disordered. Residues 282-299 (DASQGRDSQGKPSRSLTR) are compositionally biased toward polar residues. 2 coiled-coil regions span residues 384-415 (NIEFLLEQEKMLKANCVREEEKAAELQLKSKL) and 497-522 (RDEKMKEKQRHQQERLKAALEKAVAQ). A disordered region spans residues 522-563 (QPKKKLGRRLVFHSKPPSGNKQQLPLVNETKTKSQEEEYFFT). Over residues 523-533 (PKKKLGRRLVF) the composition is skewed to basic residues.

Interacts with CCDC42, CFAP53, IFT88 and ODF2. Interacts with CCDC146. Interacts with TEKT3. Interacts with ubiquitinated histone H2A.

Its subcellular location is the cytoplasm. It is found in the cytoskeleton. The protein resides in the microtubule organizing center. It localises to the centrosome. The protein localises to the perinuclear region. Its subcellular location is the cell projection. It is found in the cilium. The protein resides in the flagellum. In terms of biological role, essential for male fertility. Required for sperm flagellum biogenesis. Also required for acrosome biogenesis. Required for the attachment of developing acrosomes to the nucleus during spermiogenesis and may be involved in the transport of fibrous sheath components. The chain is Coiled-coil domain-containing protein 38 (CCDC38) from Homo sapiens (Human).